The sequence spans 396 residues: ATP-dependent RNA helicase eIF4A (396 aa).

The Q motif signature appears at 22–50 (YSFDDLNLKPNIVRGIFGYGYESPSAIQQ). Residues 53–223 (ILPITEGRDV…TKFMNNPVRI (171 aa)) form the Helicase ATP-binding domain. 66 to 73 (AQSGTGKT) is an ATP binding site. The short motif at 171-174 (DEAD) is the DEAD box element. Residues 234–395 (GIKQFYINVE…EMPANIGELF (162 aa)) enclose the Helicase C-terminal domain.

The protein belongs to the DEAD box helicase family. eIF4A subfamily. Component of the eIF4F complex, which composition varies with external and internal environmental conditions. It is composed of at least eIF4A, eIF4E and eIF4G.

The protein localises to the cytoplasm. It catalyses the reaction ATP + H2O = ADP + phosphate + H(+). In terms of biological role, ATP-dependent RNA helicase which is a subunit of the eIF4F complex involved in cap recognition and is required for mRNA binding to ribosome. In the current model of translation initiation, eIF4A unwinds RNA secondary structures in the 5'-UTR of mRNAs which is necessary to allow efficient binding of the small ribosomal subunit, and subsequent scanning for the initiator codon. This chain is ATP-dependent RNA helicase eIF4A (TIF1), found in Meyerozyma guilliermondii (strain ATCC 6260 / CBS 566 / DSM 6381 / JCM 1539 / NBRC 10279 / NRRL Y-324) (Yeast).